The primary structure comprises 282 residues: Plant cysteine oxidase 3 (282 aa).

Fe cation-binding residues include His-131, His-133, and His-202.

The protein belongs to the cysteine dioxygenase family. The cofactor is Fe(2+).

The protein localises to the nucleus. The protein resides in the cytoplasm. It carries out the reaction L-cysteine + O2 = 3-sulfino-L-alanine + H(+). Catalyzes the oxidation of N-terminal cysteine residues (N-Cys), thus preparing the protein for N-end rule pathway-mediated proteasomal degradation, upstream of the N-end rule enzymes ATE1, ATE2 and PRT6. Controls the preparation of the group VII ethylene response factor (ERF-VII) proteins for degradation via the 26S proteasome N-end rule pathway. Acts as an oxygen sensor that controls the stability of ERF-VII proteins, which are stabilized in flooding-induced hypoxia, and regulate transcriptional adaptation to these adverse conditions. This is Plant cysteine oxidase 3 from Arabidopsis thaliana (Mouse-ear cress).